The following is a 606-amino-acid chain: NADH-ubiquinone oxidoreductase chain 5 (606 aa).

A run of 16 helical transmembrane segments spans residues 1–21 (MNLFTSFTLLTLLILTTPIMM), 35–55 (YVKNIVFCAFITSLVPAMVYL), 87–107 (LMFMPVALFITWSIMEFSMWY), 114–134 (INQFFKYLLLFLITMLILVTA), 140–160 (LFIGWEGVGIMSFLLIGWWFG), 171–191 (AILYNRIGDIGLLASMAWFLS), 211–233 (FPLMGLVLAAAGKSAQFGLHPWL), 241–261 (TPVSALLHSSTMVVAGIFLLV), 272–292 (LIQTVTLCLGAITTLFTAICA), 301–320 (IIAFSTSSQLGLMMVTIGLN), 325–347 (AFLHICTHAFFKAMLFLCSGSII), 366–386 (LPFTTTALIIGCLALTGMPFL), 413–433 (LIATSLTAVYSTRIIFFALLG), 457–477 (LLVGSIFAGFILSNSIPPMTT), 482–502 (MPLHLKLTALAMTTLGFIIAF), and 582–602 (GLIKLYFLSFLITITLSMILF).

The protein belongs to the complex I subunit 5 family. Core subunit of respiratory chain NADH dehydrogenase (Complex I) which is composed of 45 different subunits.

It is found in the mitochondrion inner membrane. It carries out the reaction a ubiquinone + NADH + 5 H(+)(in) = a ubiquinol + NAD(+) + 4 H(+)(out). In terms of biological role, core subunit of the mitochondrial membrane respiratory chain NADH dehydrogenase (Complex I) which catalyzes electron transfer from NADH through the respiratory chain, using ubiquinone as an electron acceptor. Essential for the catalytic activity and assembly of complex I. This is NADH-ubiquinone oxidoreductase chain 5 (MT-ND5) from Balaenoptera physalus (Fin whale).